A 301-amino-acid polypeptide reads, in one-letter code: Glycine--tRNA ligase alpha subunit (301 aa).

The protein belongs to the class-II aminoacyl-tRNA synthetase family. Tetramer of two alpha and two beta subunits.

It is found in the cytoplasm. It catalyses the reaction tRNA(Gly) + glycine + ATP = glycyl-tRNA(Gly) + AMP + diphosphate. The protein is Glycine--tRNA ligase alpha subunit of Shewanella piezotolerans (strain WP3 / JCM 13877).